We begin with the raw amino-acid sequence, 182 residues long: Ribosome maturation factor RimM (182 aa).

A PRC barrel domain is found at Glu-106 to Leu-179.

This sequence belongs to the RimM family. In terms of assembly, binds ribosomal protein uS19.

The protein resides in the cytoplasm. In terms of biological role, an accessory protein needed during the final step in the assembly of 30S ribosomal subunit, possibly for assembly of the head region. Essential for efficient processing of 16S rRNA. May be needed both before and after RbfA during the maturation of 16S rRNA. It has affinity for free ribosomal 30S subunits but not for 70S ribosomes. This is Ribosome maturation factor RimM from Synechococcus elongatus (strain ATCC 33912 / PCC 7942 / FACHB-805) (Anacystis nidulans R2).